Reading from the N-terminus, the 498-residue chain is Probable FAD-binding monooxygenase AlmA (498 aa).

Residues 4–24 (HIDILIVGAGISGIGIAAHLS) traverse the membrane as a helical segment. 5 residues coordinate FAD: Ser15, Glu36, Asp56, Phe62, and Val104. 54 to 56 (RSD) is a binding site for NADP(+). NADP(+) is bound by residues 184-190 (SGATAIT), 208-209 (RS), and 292-293 (RL). Val395 contacts FAD.

This sequence belongs to the FAD-binding monooxygenase family. It depends on FAD as a cofactor.

It is found in the cell membrane. It functions in the pathway hydrocarbon metabolism; alkane degradation. Its function is as follows. Is able to catalyze the degradation of n-alkanes with C chain lengths of 32 and 36. Probably allows Acinetobacter baylyi strain ADP1 to grow on the long-chain n-alkane dotriacontane (C32H66) as a sole carbon source. This chain is Probable FAD-binding monooxygenase AlmA, found in Acinetobacter baylyi (strain ATCC 33305 / BD413 / ADP1).